We begin with the raw amino-acid sequence, 104 residues long: uncharacterized protein (104 aa).

Residues 72–92 (LIFSHNIVIIVSPIYMISFII) form a helical membrane-spanning segment.

Its subcellular location is the membrane. This is an uncharacterized protein from Saccharomyces cerevisiae (strain ATCC 204508 / S288c) (Baker's yeast).